The following is a 396-amino-acid chain: KiSS-1 receptor (396 aa).

Residues 1–43 (MATEATLAPNVTWWAPSNASGCPGCGVNASDDPGSAPRPLDAW) are Extracellular-facing. 3 N-linked (GlcNAc...) asparagine glycosylation sites follow: Asn-10, Asn-18, and Asn-28. A helical membrane pass occupies residues 44 to 66 (LVPLFFATLMLLGLVGNSLVIYV). The Cytoplasmic segment spans residues 67–78 (ICRHKHMQTVTN). Residues 79–101 (FYIANLAATDVTFLLCCVPFTAL) traverse the membrane as a helical segment. Residues 102–116 (LYPLPAWVLGDFMCK) are Extracellular-facing. An intrachain disulfide couples Cys-115 to Cys-191. Residues 117–138 (FVNYIQQVSVQATCATLTAMSV) traverse the membrane as a helical segment. Over 139-157 (DRWYVTVFPLRALHRRTPR) the chain is Cytoplasmic. Residues 158 to 180 (LALAVSLSIWVGSAAVSAPVLAL) traverse the membrane as a helical segment. Residues 181-203 (HRLSPGPRTYCSEAFPSRALERA) are Extracellular-facing. Residues 204-224 (FALYNLLALYLLPLLATCACY) form a helical membrane-spanning segment. Topologically, residues 225 to 260 (GAMLRHLGRAAVRPAPTDGALQGQLLAQRAGAVRTK) are cytoplasmic. The chain crosses the membrane as a helical span at residues 261–283 (VSRLVAAVVLLFAACWGPIQLFL). At 284–305 (VLQALGPSGAWHPRSYAAYAVK) the chain is on the extracellular side. A helical transmembrane segment spans residues 306–330 (IWAHCMSYSNSALNPLLYAFLGSHF). Residues 331 to 396 (RQAFCRVCPC…CAQSERTASL (66 aa)) are Cytoplasmic-facing. Positions 349–396 (HTSAHSDRAATHTVPHSRAAHPVRIRSPEPGNPVVRSPCAQSERTASL) are disordered. A compositionally biased stretch (polar residues) spans 387–396 (CAQSERTASL).

Belongs to the G-protein coupled receptor 1 family. As to expression, highest level in the heart and 15- and 17-day embryos. Low level in other tissues. Colocalized with gonadotropin-releasing hormone (GnRH) neurons in the hypothalamus.

It is found in the cell membrane. In terms of biological role, receptor for metastin (kisspeptin-52 or kp-52), a C-terminally amidated peptide of KiSS1. KiSS1 is a metastasis suppressor protein. Activation of the receptor inhibits cell proliferation and cell migration, key characteristics of tumor metastasis. The receptor is essential for normal gonadotropin-released hormone physiology and for puberty. The hypothalamic KiSS1/KISS1R system is a pivotal factor in central regulation of the gonadotropic axis at puberty and in adulthood. Analysis of the transduction pathways activated by the receptor identifies coupling to phospholipase C and intracellular calcium release through pertussis toxin-insensitive G(q) proteins. This chain is KiSS-1 receptor (Kiss1r), found in Mus musculus (Mouse).